The primary structure comprises 549 residues: Ankyrin repeat domain-containing protein SOWAHA (549 aa).

The N-terminal stretch at 1–17 (MALAAAAAAAAAGVSQA) is a signal peptide. Disordered regions lie at residues 82–219 (KPRP…PCML) and 235–256 (EEPG…PLLL). Over residues 203–216 (PGPGAAKGPPQQKP) the composition is skewed to low complexity. Positions 235 to 248 (EEPGLRRQLSEEPS) are enriched in basic and acidic residues. At serine 260 the chain carries Phosphoserine. ANK repeat units lie at residues 345-374 (SGFT…RSGA) and 384-414 (GGYT…QVHV). Residues 513-549 (PRKKTKIRGGLPAFSEISRRPTPGPLAGLVPSLPPTT) form a disordered region.

The protein belongs to the SOWAH family.

The polypeptide is Ankyrin repeat domain-containing protein SOWAHA (SOWAHA) (Homo sapiens (Human)).